A 570-amino-acid chain; its full sequence is Protein FAM227A (570 aa).

Basic and acidic residues predominate over residues 87–99 (LREKTRSSPEDKV). Disordered regions lie at residues 87 to 112 (LREK…CKGS), 336 to 374 (PAQS…QNTA), and 519 to 570 (KAAD…TSKP). At tyrosine 343 the chain carries Phosphotyrosine. Positions 345–362 (PQSSSANSPSEKTSSAKQ) are enriched in polar residues. Serine 348 and serine 349 each carry phosphoserine. 2 stretches are compositionally biased toward basic and acidic residues: residues 363–374 (NSEKSLRMQNTA) and 540–562 (SPDK…EVEH).

Belongs to the FAM227 family.

This is Protein FAM227A (FAM227A) from Homo sapiens (Human).